We begin with the raw amino-acid sequence, 440 residues long: Thymidine phosphorylase (440 aa).

This sequence belongs to the thymidine/pyrimidine-nucleoside phosphorylase family. In terms of assembly, homodimer.

The catalysed reaction is thymidine + phosphate = 2-deoxy-alpha-D-ribose 1-phosphate + thymine. The protein operates within pyrimidine metabolism; dTMP biosynthesis via salvage pathway; dTMP from thymine: step 1/2. In terms of biological role, the enzymes which catalyze the reversible phosphorolysis of pyrimidine nucleosides are involved in the degradation of these compounds and in their utilization as carbon and energy sources, or in the rescue of pyrimidine bases for nucleotide synthesis. The chain is Thymidine phosphorylase from Burkholderia pseudomallei (strain K96243).